The chain runs to 82 residues: Small ribosomal subunit protein uS17 (82 aa).

This sequence belongs to the universal ribosomal protein uS17 family. In terms of assembly, part of the 30S ribosomal subunit.

One of the primary rRNA binding proteins, it binds specifically to the 5'-end of 16S ribosomal RNA. This Shewanella sediminis (strain HAW-EB3) protein is Small ribosomal subunit protein uS17.